The following is a 469-amino-acid chain: Threonine synthase (469 aa).

The residue at position 112 (lysine 112) is an N6-(pyridoxal phosphate)lysine.

It belongs to the threonine synthase family. Requires pyridoxal 5'-phosphate as cofactor.

It carries out the reaction O-phospho-L-homoserine + H2O = L-threonine + phosphate. It participates in amino-acid biosynthesis; L-threonine biosynthesis; L-threonine from L-aspartate: step 5/5. Its function is as follows. Catalyzes the gamma-elimination of phosphate from L-phosphohomoserine and the beta-addition of water to produce L-threonine. In Pseudomonas aeruginosa (strain ATCC 15692 / DSM 22644 / CIP 104116 / JCM 14847 / LMG 12228 / 1C / PRS 101 / PAO1), this protein is Threonine synthase (thrC).